A 592-amino-acid polypeptide reads, in one-letter code: Syntaxin-binding protein 3 (592 aa).

The interval 1–255 (MAPPVSERGL…STVLHELTFQ (255 aa)) is mediates interaction with DOC2B.

The protein belongs to the STXBP/unc-18/SEC1 family. As to quaternary structure, interacts with STX4. Interacts with DOC2B; the interaction is direct, occurs at the cell membrane, excludes interaction with STX4 and regulates glucose-stimulated insulin secretion. In terms of processing, phosphorylated by PKC in platelets in response to thrombin stimulation; phosphorylation inhibits binding to STX4. As to expression, ubiquitously expressed in all tissues tested.

It is found in the cytoplasm. The protein resides in the cytosol. Its subcellular location is the cell membrane. Together with STX4 and VAMP2, may play a role in insulin-dependent movement of GLUT4 and in docking/fusion of intracellular GLUT4-containing vesicles with the cell surface in adipocytes. The polypeptide is Syntaxin-binding protein 3 (Stxbp3) (Mus musculus (Mouse)).